Reading from the N-terminus, the 255-residue chain is F-box/SPRY domain-containing protein 1 (255 aa).

The 49-residue stretch at 3-51 (DPVAALCNYNVLEVIFSYLELDDLSHCSQVCKSWYHFLNDENSDVWRWH) folds into the F-box domain. The 193-residue stretch at 61–253 (LKSDLLSSVS…VSMVYLGTPL (193 aa)) folds into the B30.2/SPRY domain.

The protein belongs to the FBXO45/Fsn family. Component of an E3 ubiquitin ligase complex composed of hiw and Fsn.

It localises to the synapse. It participates in protein modification; protein ubiquitination. Required in the presynaptic motoneuron to down-regulate the levels of wnd and restrain synaptic terminal growth at the neuromuscular junction (NMJ). In Drosophila simulans (Fruit fly), this protein is F-box/SPRY domain-containing protein 1.